The chain runs to 739 residues: Sulfate transporter (739 aa).

Composition is skewed to basic and acidic residues over residues 1 to 17 (MSSENKEQHDLSPRDLP) and 31 to 46 (TQRRSGTDLRQSETGH). The tract at residues 1 to 47 (MSSENKEQHDLSPRDLPEEAFGFPSELPLETQRRSGTDLRQSETGHG) is disordered. The residue at position 12 (Ser-12) is a Phosphoserine. 2 helical membrane passes run 112-132 (VMSGLIVGILLVPQSIAYSLL) and 137-157 (PIYGLYTSFFASIIYFLFGTS). N-linked (GlcNAc...) asparagine glycosylation occurs at Asn-205. 2 consecutive transmembrane segments (helical) span residues 227–247 (FMAGVYQVAMGFFQVGFVSVY) and 255–275 (GFVTGASFTILTSQAKYLLGL). An N-linked (GlcNAc...) asparagine glycan is attached at Asn-357. The next 4 membrane-spanning stretches (helical) occupy residues 378-398 (LIPNVAVDAIAISIIGFAITV), 420-440 (AIGFCNIIPSFFHCITTSAAL), 455-475 (LSAIVTALVLLLVLLVIAPLF), and 524-544 (LLSTEIGLLVGVCFSMFCVIL). Residues 568–719 (TYKNLRSKSG…YSLSEAVAFA (152 aa)) enclose the STAS domain.

It belongs to the SLC26A/SulP transporter (TC 2.A.53) family. Post-translationally, N-glycosylated. As to expression, distributed mainly in the thymus, testis and osteoblastic cells. Highly expressed in the bone, cartilage, kidney and colon.

The protein localises to the cell membrane. It is found in the apical cell membrane. The catalysed reaction is oxalate(in) + sulfate(out) = oxalate(out) + sulfate(in). The enzyme catalyses sulfate(out) + 2 chloride(in) = sulfate(in) + 2 chloride(out). It catalyses the reaction oxalate(out) + 2 chloride(in) = oxalate(in) + 2 chloride(out). It carries out the reaction bromide(in) + chloride(out) = bromide(out) + chloride(in). The catalysed reaction is nitrate(in) + chloride(out) = nitrate(out) + chloride(in). The enzyme catalyses iodide(in) + chloride(out) = iodide(out) + chloride(in). Functionally, sulfate transporter which mediates sulfate uptake into chondrocytes in order to maintain adequate sulfation of proteoglycans which is needed for cartilage development. Mediates electroneutral anion exchange of sulfate ions for oxalate ions, sulfate and oxalate ions for chloride and/or hydroxyl ions and chloride ions for bromide, iodide and nitrate ions. The coupling of sulfate transport to both hydroxyl and chloride ions likely serves to ensure transport at both acidic pH when most sulfate uptake is mediated by sulfate-hydroxide exchange and alkaline pH when most sulfate uptake is mediated by sulfate-chloride exchange. Essential for chondrocyte proliferation, differentiation and cell size expansion. In Mus musculus (Mouse), this protein is Sulfate transporter (Slc26a2).